Consider the following 187-residue polypeptide: Acireductone dioxygenase 4 (187 aa).

The residue at position 2 (A2) is an N-acetylalanine. H89, H91, E95, and H134 together coordinate Fe(2+). Residues H89, H91, E95, and H134 each contribute to the Ni(2+) site.

The protein belongs to the acireductone dioxygenase (ARD) family. Fe(2+) serves as cofactor. The cofactor is Ni(2+).

The protein localises to the cytoplasm. It is found in the nucleus. The enzyme catalyses 1,2-dihydroxy-5-(methylsulfanyl)pent-1-en-3-one + O2 = 4-methylsulfanyl-2-oxobutanoate + formate + 2 H(+). It catalyses the reaction 1,2-dihydroxy-5-(methylsulfanyl)pent-1-en-3-one + O2 = 3-(methylsulfanyl)propanoate + CO + formate + 2 H(+). It participates in amino-acid biosynthesis; L-methionine biosynthesis via salvage pathway; L-methionine from S-methyl-5-thio-alpha-D-ribose 1-phosphate: step 5/6. In terms of biological role, catalyzes 2 different reactions between oxygen and the acireductone 1,2-dihydroxy-3-keto-5-methylthiopentene (DHK-MTPene) depending upon the metal bound in the active site. Fe-containing acireductone dioxygenase (Fe-ARD) produces formate and 2-keto-4-methylthiobutyrate (KMTB), the alpha-ketoacid precursor of methionine in the methionine recycle pathway. Ni-containing acireductone dioxygenase (Ni-ARD) produces methylthiopropionate, carbon monoxide and formate, and does not lie on the methionine recycle pathway. The chain is Acireductone dioxygenase 4 (ARD4) from Arabidopsis thaliana (Mouse-ear cress).